A 159-amino-acid chain; its full sequence is Phosphopantetheine adenylyltransferase (159 aa).

Residue Ser9 participates in substrate binding. ATP-binding positions include 9-10 (SF) and His17. Substrate contacts are provided by Lys41, Leu73, and Lys87. ATP is bound by residues 88–90 (GLR), Glu98, and 123–129 (YSYLSSS).

The protein belongs to the bacterial CoaD family. Homohexamer. Requires Mg(2+) as cofactor.

It localises to the cytoplasm. It catalyses the reaction (R)-4'-phosphopantetheine + ATP + H(+) = 3'-dephospho-CoA + diphosphate. The protein operates within cofactor biosynthesis; coenzyme A biosynthesis; CoA from (R)-pantothenate: step 4/5. In terms of biological role, reversibly transfers an adenylyl group from ATP to 4'-phosphopantetheine, yielding dephospho-CoA (dPCoA) and pyrophosphate. This Clostridium botulinum (strain Alaska E43 / Type E3) protein is Phosphopantetheine adenylyltransferase.